A 382-amino-acid polypeptide reads, in one-letter code: D-galactonate dehydratase (382 aa).

Position 183 (aspartate 183) interacts with Mg(2+). Histidine 185 functions as the Proton donor in the catalytic mechanism. Glutamate 209 and glutamate 235 together coordinate Mg(2+). Histidine 285 serves as the catalytic Proton acceptor.

It belongs to the mandelate racemase/muconate lactonizing enzyme family. GalD subfamily. Requires Mg(2+) as cofactor.

The enzyme catalyses D-galactonate = 2-dehydro-3-deoxy-D-galactonate + H2O. It functions in the pathway carbohydrate acid metabolism; D-galactonate degradation; D-glyceraldehyde 3-phosphate and pyruvate from D-galactonate: step 1/3. Functionally, catalyzes the dehydration of D-galactonate to 2-keto-3-deoxy-D-galactonate. The chain is D-galactonate dehydratase from Escherichia fergusonii (strain ATCC 35469 / DSM 13698 / CCUG 18766 / IAM 14443 / JCM 21226 / LMG 7866 / NBRC 102419 / NCTC 12128 / CDC 0568-73).